We begin with the raw amino-acid sequence, 350 residues long: tRNA pseudouridine synthase D (350 aa).

The active-site Nucleophile is the Asp79. The TRUD domain occupies 154-306 (GAPNYYGPQR…EQERRPIVLY (153 aa)).

Belongs to the pseudouridine synthase TruD family.

The enzyme catalyses uridine(13) in tRNA = pseudouridine(13) in tRNA. Responsible for synthesis of pseudouridine from uracil-13 in transfer RNAs. The protein is tRNA pseudouridine synthase D of Pseudoalteromonas atlantica (strain T6c / ATCC BAA-1087).